The primary structure comprises 246 residues: Probable H/ACA ribonucleoprotein complex subunit 1-like protein (246 aa).

Disordered stretches follow at residues 1 to 61 (MSFR…GGYD) and 155 to 246 (PQVG…TKFD). RGG-box stretches follow at residues 4–59 (RGGR…GRGG) and 161–223 (RGRG…RGRG). Residues 168 to 180 (RGGDRGRGGDRGR) show a composition bias toward basic and acidic residues. Positions 181–221 (GGFGGRGGGGGGFRGGSRGGFGGGDRGGFRGGRGGDFGGRG) are enriched in gly residues.

Belongs to the GAR1 family. As to quaternary structure, component of the small nucleolar ribonucleoprotein particle containing H/ACA-type snoRNAs (H/ACA snoRNPs).

The protein resides in the nucleus. Its subcellular location is the nucleolus. Functionally, required for ribosome biogenesis. Part of a complex which catalyzes pseudouridylation of rRNA. This involves the isomerization of uridine such that the ribose is subsequently attached to C5, instead of the normal N1. Pseudouridine ('psi') residues may serve to stabilize the conformation of rRNAs. The sequence is that of Probable H/ACA ribonucleoprotein complex subunit 1-like protein from Caenorhabditis briggsae.